Here is a 203-residue protein sequence, read N- to C-terminus: Thymidylate kinase (203 aa).

7–14 contributes to the ATP binding site; sequence GGEGAGKT.

Belongs to the thymidylate kinase family.

The catalysed reaction is dTMP + ATP = dTDP + ADP. Functionally, phosphorylation of dTMP to form dTDP in both de novo and salvage pathways of dTTP synthesis. The chain is Thymidylate kinase (tmk) from Chlamydia muridarum (strain MoPn / Nigg).